The primary structure comprises 442 residues: tRNA modification GTPase MnmE (442 aa).

Positions 21, 79, and 118 each coordinate (6S)-5-formyl-5,6,7,8-tetrahydrofolate. The TrmE-type G domain maps to 214-367 (GFKIAIIGKP…LKEELQNYLN (154 aa)). Residue asparagine 224 coordinates K(+). GTP-binding positions include 224–229 (NVGKSS), 243–249 (SDIAGTT), and 268–271 (DTAG). Serine 228 contributes to the Mg(2+) binding site. K(+) is bound by residues serine 243, isoleucine 245, and threonine 248. Residue threonine 249 participates in Mg(2+) binding. Residue lysine 442 coordinates (6S)-5-formyl-5,6,7,8-tetrahydrofolate.

Belongs to the TRAFAC class TrmE-Era-EngA-EngB-Septin-like GTPase superfamily. TrmE GTPase family. Homodimer. Heterotetramer of two MnmE and two MnmG subunits. Requires K(+) as cofactor.

The protein localises to the cytoplasm. Its function is as follows. Exhibits a very high intrinsic GTPase hydrolysis rate. Involved in the addition of a carboxymethylaminomethyl (cmnm) group at the wobble position (U34) of certain tRNAs, forming tRNA-cmnm(5)s(2)U34. The chain is tRNA modification GTPase MnmE from Campylobacter jejuni subsp. doylei (strain ATCC BAA-1458 / RM4099 / 269.97).